A 726-amino-acid chain; its full sequence is E3 SUMO-protein ligase SIZ2 (726 aa).

Residues 43 to 77 (MEQLKVLELKQICKSLDLSITGKKAVLQDRIKQFL) enclose the SAP domain. Positions 139–291 (TALPPYSQQQ…SISCFIVEVF (153 aa)) constitute a PINIT domain. The SP-RING-type zinc-finger motif lies at 323 to 408 (DDDDIITTST…IQNCNEDVEQ (86 aa)). Zn(2+) is bound by residues Cys354, His356, Cys377, and Cys380. A disordered region spans residues 507–533 (PSESEGSSDYNPNHTSTPKGSPTMDQD). Polar residues predominate over residues 510–533 (SEGSSDYNPNHTSTPKGSPTMDQD).

This sequence belongs to the PIAS family. Interacts with CDC12. Autosumoylated upon ethanol stress.

Its subcellular location is the nucleus. Its pathway is protein modification; protein sumoylation. In terms of biological role, may act as an E3 ligase mediating SUMO/Smt3 attachment to septins. May be involved in chromosome maintenance. This Saccharomyces cerevisiae (strain ATCC 204508 / S288c) (Baker's yeast) protein is E3 SUMO-protein ligase SIZ2 (NFI1).